The primary structure comprises 421 residues: Medium-chain specific acyl-CoA dehydrogenase, mitochondrial (421 aa).

A mitochondrion-targeting transit peptide spans 1 to 25 (MAAGFGRCCRVLRSISRFQWRSQHT). At lysine 69 the chain carries N6-acetyllysine; alternate. Lysine 69 carries the N6-succinyllysine; alternate modification. 158-167 (YCVTEPGAGS) lines the FAD pocket. Serine 167 serves as a coordination point for octanoyl-CoA. At lysine 179 the chain carries N6-succinyllysine. 191–193 (WIT) provides a ligand contact to FAD. An N6-acetyllysine; alternate mark is found at lysine 212, lysine 217, and lysine 271. Residues lysine 212, lysine 217, and lysine 271 each carry the N6-succinyllysine; alternate modification. An octanoyl-CoA-binding site is contributed by aspartate 278. Lysine 279 carries the post-translational modification N6-acetyllysine. Arginine 281 is a binding site for octanoyl-CoA. An N6-acetyllysine modification is found at lysine 301. FAD contacts are provided by residues 306 to 308 (RKT) and 316 to 317 (HQ). Residues arginine 349 and threonine 351 each coordinate octanoyl-CoA. Residue threonine 351 is modified to Phosphothreonine. 374–378 (QILGG) is a binding site for FAD. Position 401 (glutamate 401) interacts with octanoyl-CoA. Glutamate 401 functions as the Proton acceptor in the catalytic mechanism. 402–405 (GTSQ) is an FAD binding site.

It belongs to the acyl-CoA dehydrogenase family. As to quaternary structure, homotetramer. Interacts with the heterodimeric electron transfer flavoprotein ETF. FAD serves as cofactor. Acetylated. Could occur at proximity of the cofactor-binding sites and reduce the catalytic activity. Could be deacetylated by SIRT3.

The protein resides in the mitochondrion matrix. The enzyme catalyses a medium-chain 2,3-saturated fatty acyl-CoA + oxidized [electron-transfer flavoprotein] + H(+) = a medium-chain (2E)-enoyl-CoA + reduced [electron-transfer flavoprotein]. It carries out the reaction pentanoyl-CoA + oxidized [electron-transfer flavoprotein] + H(+) = (2E)-pentenoyl-CoA + reduced [electron-transfer flavoprotein]. It catalyses the reaction hexanoyl-CoA + oxidized [electron-transfer flavoprotein] + H(+) = (2E)-hexenoyl-CoA + reduced [electron-transfer flavoprotein]. The catalysed reaction is octanoyl-CoA + oxidized [electron-transfer flavoprotein] + H(+) = (2E)-octenoyl-CoA + reduced [electron-transfer flavoprotein]. The enzyme catalyses decanoyl-CoA + oxidized [electron-transfer flavoprotein] + H(+) = (2E)-decenoyl-CoA + reduced [electron-transfer flavoprotein]. It carries out the reaction dodecanoyl-CoA + oxidized [electron-transfer flavoprotein] + H(+) = (2E)-dodecenoyl-CoA + reduced [electron-transfer flavoprotein]. It catalyses the reaction tetradecanoyl-CoA + oxidized [electron-transfer flavoprotein] + H(+) = (2E)-tetradecenoyl-CoA + reduced [electron-transfer flavoprotein]. The catalysed reaction is oxidized [electron-transfer flavoprotein] + hexadecanoyl-CoA + H(+) = (2E)-hexadecenoyl-CoA + reduced [electron-transfer flavoprotein]. It participates in lipid metabolism; mitochondrial fatty acid beta-oxidation. In terms of biological role, medium-chain specific acyl-CoA dehydrogenase is one of the acyl-CoA dehydrogenases that catalyze the first step of mitochondrial fatty acid beta-oxidation, an aerobic process breaking down fatty acids into acetyl-CoA and allowing the production of energy from fats. The first step of fatty acid beta-oxidation consists in the removal of one hydrogen from C-2 and C-3 of the straight-chain fatty acyl-CoA thioester, resulting in the formation of trans-2-enoyl-CoA. Electron transfer flavoprotein (ETF) is the electron acceptor that transfers electrons to the main mitochondrial respiratory chain via ETF-ubiquinone oxidoreductase (ETF dehydrogenase). Among the different mitochondrial acyl-CoA dehydrogenases, medium-chain specific acyl-CoA dehydrogenase acts specifically on acyl-CoAs with saturated 6 to 12 carbons long primary chains. The chain is Medium-chain specific acyl-CoA dehydrogenase, mitochondrial from Pan troglodytes (Chimpanzee).